A 131-amino-acid polypeptide reads, in one-letter code: Small ribosomal subunit protein uS8c (131 aa).

It belongs to the universal ribosomal protein uS8 family. As to quaternary structure, part of the 30S ribosomal subunit.

The protein resides in the plastid. It localises to the chloroplast. One of the primary rRNA binding proteins, it binds directly to 16S rRNA central domain where it helps coordinate assembly of the platform of the 30S subunit. The polypeptide is Small ribosomal subunit protein uS8c (rps8) (Phalaenopsis aphrodite subsp. formosana (Moth orchid)).